A 458-amino-acid polypeptide reads, in one-letter code: Alpha-2C adrenergic receptor (458 aa).

At 1-51 (MASPALAAALAAAAAEGPNGSDAGEWGSGGGANASGTDWVPPPGQYSAGAV) the chain is on the extracellular side. N-linked (GlcNAc...) asparagine glycans are attached at residues N19 and N33. A helical transmembrane segment spans residues 52–76 (AGLAAVVGFLIVFTVVGNVLVVIAV). Residues 77–88 (LTSRALRAPQNL) are Cytoplasmic-facing. Residues 89 to 114 (FLVSLASADILVATLVMPFSLANELM) traverse the membrane as a helical segment. At 115–124 (AYWYFGQVWC) the chain is on the extracellular side. C124 and C202 are joined by a disulfide. The chain crosses the membrane as a helical span at residues 125 to 147 (GVYLALDVLFCTSSIVHLCAISL). At 148–168 (DRYWSVTQAVEYNLKRTPRRV) the chain is on the cytoplasmic side. Residues 169-191 (KATIVAVWLISAVISFPPLVSFY) form a helical membrane-spanning segment. Residues 192–207 (RRPDGAAYPQCGLNDE) lie on the Extracellular side of the membrane. The helical transmembrane segment at 208–231 (TWYILSSCIGSFFAPCLIMGLVYA) threads the bilayer. The Cytoplasmic portion of the chain corresponds to 232–379 (RIYRVAKLRT…QAREKRFTFV (148 aa)). The interval 245–343 (SEKRGPAGPD…SPGPGGRLSR (99 aa)) is disordered. Positions 291–303 (RRRRRGALRRGGR) are enriched in basic residues. Residues 380–403 (LAVVMGVFVLCWFPFFFSYSLYGI) traverse the membrane as a helical segment. Residues 404–416 (CREACQLPEPLFK) lie on the Extracellular side of the membrane. Residues 417 to 437 (FFFWIGYCNSSLNPVIYTVFN) form a helical membrane-spanning segment. Over 438 to 458 (QDFRRSFKHILFRRRRRGFRQ) the chain is Cytoplasmic.

This sequence belongs to the G-protein coupled receptor 1 family. Adrenergic receptor subfamily. ADRA2C sub-subfamily.

It localises to the cell membrane. Its function is as follows. Alpha-2 adrenergic receptors mediate the catecholamine-induced inhibition of adenylate cyclase through the action of G proteins. This is Alpha-2C adrenergic receptor (Adra2c) from Mus musculus (Mouse).